The chain runs to 181 residues: UPF0215 protein AF_1433 (181 aa).

It belongs to the UPF0215 family.

The chain is UPF0215 protein AF_1433 from Archaeoglobus fulgidus (strain ATCC 49558 / DSM 4304 / JCM 9628 / NBRC 100126 / VC-16).